Consider the following 155-residue polypeptide: SsrA-binding protein (155 aa).

Positions 127 to 149 (KKDYDKRNDMRKKEAKREMERTF) are enriched in basic and acidic residues. The segment at 127-155 (KKDYDKRNDMRKKEAKREMERTFKSKNQY) is disordered.

The protein belongs to the SmpB family.

It is found in the cytoplasm. Required for rescue of stalled ribosomes mediated by trans-translation. Binds to transfer-messenger RNA (tmRNA), required for stable association of tmRNA with ribosomes. tmRNA and SmpB together mimic tRNA shape, replacing the anticodon stem-loop with SmpB. tmRNA is encoded by the ssrA gene; the 2 termini fold to resemble tRNA(Ala) and it encodes a 'tag peptide', a short internal open reading frame. During trans-translation Ala-aminoacylated tmRNA acts like a tRNA, entering the A-site of stalled ribosomes, displacing the stalled mRNA. The ribosome then switches to translate the ORF on the tmRNA; the nascent peptide is terminated with the 'tag peptide' encoded by the tmRNA and targeted for degradation. The ribosome is freed to recommence translation, which seems to be the essential function of trans-translation. This chain is SsrA-binding protein, found in Lysinibacillus sphaericus (strain C3-41).